The primary structure comprises 332 residues: Processive diacylglycerol alpha-glucosyltransferase (332 aa).

Belongs to the glycosyltransferase group 1 family. Glycosyltransferase 4 subfamily. Mg(2+) serves as cofactor.

The protein localises to the cell membrane. It catalyses the reaction a 1,2-diacyl-sn-glycerol + UDP-alpha-D-glucose = a 1,2-diacyl-3-O-(alpha-D-glucopyranosyl)-sn-glycerol + UDP + H(+). It carries out the reaction a 1,2-diacyl-3-O-(alpha-D-glucopyranosyl)-sn-glycerol + UDP-alpha-D-glucose = a 1,2-diacyl-3-O-[alpha-D-glucosyl-(1-&gt; 2)-alpha-D-glucosyl]-sn-glycerol + UDP + H(+). It participates in glycolipid metabolism; diglucosyl-diacylglycerol biosynthesis. Its activity is regulated as follows. Activated by the negatively charged lipids phosphatidylglycerol (PG), cardiolipin (CL), nonbilayer-prone 1,3-DAG, 1,2-dioleoylphosphatidylglycerol (DOPG) and 1,2-dioleoylphosphatidylserine (DOPS). Inhibited by 1,2-diacyl-3-O-(alpha-D-galactopyranosyl)-sn-glycerol, 1,2-diacyl-3-O-[6-O-acyl(alpha-D-glucopyranosyl)]-sn-glycerol and 1,2-diacyl-3-O-[alpha-D-glucopyranosyl-(1-&gt;2)-O-(6-O-acyl-alpha-D-glucopyranosyl)]-sn-glycerol. Processive glucosyltransferase involved in the biosynthesis of both the non-bilayer-prone alpha-monoglucosyldiacylglycerol and the bilayer-forming membrane lipid alpha-diglucosyldiacylglycerol. These are major components for maintaining the anionic lipid surface charge density, for balancing the bilayer to non-bilayer phase equilibria and for keeping a constant lipid bilayer spontaneous curvature (curvature packing stress). Catalyzes the transfer of a glucosyl residue from UDP-Glc to diacylglycerol (DAG) acceptor to form the corresponding alpha-glucosyl-DAG (1,2-diacyl-3-O-(alpha-D-glucopyranosyl)-sn-glycerol), which then acts as acceptor to give alpha-diglucosyl-DAG product (3-O-(alpha-D-glucopyranosyl-alpha-(1-&gt;2)-D-glucopyranosyl)-1,2-diacyl-sn-glycerol). It can only use UDP-Glc as sugar donor. In Acholeplasma laidlawii, this protein is Processive diacylglycerol alpha-glucosyltransferase (dgs).